Reading from the N-terminus, the 227-residue chain is Neuromodulin (227 aa).

Positions Met1–Ala227 are disordered. 2 S-palmitoyl cysteine lipidation sites follow: Cys3 and Cys4. Residues Lys9 to His32 show a composition bias toward basic and acidic residues. An IQ domain is found at Ala31–Pro60. A Phosphoserine; by PHK modification is found at Ser41. A compositionally biased stretch (basic and acidic residues) spans Glu54–Asp84. A compositionally biased stretch (low complexity) spans Gly85 to Pro97. Ser86 and Ser96 each carry phosphoserine. Residues Lys98–Gly127 show a composition bias toward basic and acidic residues. Low complexity predominate over residues Ser128–Thr139. Phosphothreonine is present on Thr138. Ser142, Ser144, and Ser145 each carry phosphoserine. A compositionally biased stretch (basic and acidic residues) spans Lys146 to Gln158. Residues Ala159–Ser193 show a composition bias toward low complexity. At Thr172 the chain carries Phosphothreonine. Phosphoserine; by CK2 is present on residues Ser192 and Ser193. The segment covering Val202–Glu215 has biased composition (basic and acidic residues). The segment covering Gly216–Ala227 has biased composition (acidic residues).

Belongs to the neuromodulin family. Identified in a complex containing FGFR4, NCAM1, CDH2, PLCG1, FRS2, SRC, SHC1, GAP43 and CTTN. Interacts (via IQ domain) with calmodulin. Binds calmodulin with a greater affinity in the absence of Ca(2+) than in its presence. Post-translationally, phosphorylated. Phosphorylation of this protein by a protein kinase C is specifically correlated with certain forms of synaptic plasticity. Palmitoylated by ZDHHC3. Palmitoylation is regulated by ARF6 and is essential for plasma membrane association and axonal and dendritic filopodia induction. Deacylated by LYPLA2. Expressed in the hippocampus (at protein level). Expressed in the dorsal root ganglion and the spinal cord (at protein level).

The protein resides in the cell membrane. It localises to the cell projection. The protein localises to the growth cone membrane. It is found in the synapse. Its subcellular location is the filopodium membrane. The protein resides in the perikaryon. It localises to the dendrite. The protein localises to the axon. It is found in the cytoplasm. In terms of biological role, this protein is associated with nerve growth. It is a major component of the motile 'growth cones' that form the tips of elongating axons. Plays a role in axonal and dendritic filopodia induction. This is Neuromodulin (Gap43) from Mus musculus (Mouse).